The following is a 618-amino-acid chain: Structural protein ORF618 (618 aa).

The stretch at 570–598 (ILEAKRQIEDRAKGLSKNLDNTVTEIMNA) forms a coiled coil.

It is found in the virion. This is Structural protein ORF618 from Acidianus two-tailed virus (ATV).